The primary structure comprises 320 residues: Undecaprenyl-diphosphatase (320 aa).

The next 8 helical transmembrane spans lie at 9 to 29, 82 to 102, 130 to 150, 161 to 181, 191 to 211, 236 to 256, 265 to 285, and 296 to 316; these read FVLI…LEVF, GVAF…WYFW, LGIV…KTFI, LGAI…GEKL, LTMQ…IPGV, FLLG…DLLA, LPLI…IAGL, and VFIW…SAGI.

The protein belongs to the UppP family.

The protein localises to the cell inner membrane. It catalyses the reaction di-trans,octa-cis-undecaprenyl diphosphate + H2O = di-trans,octa-cis-undecaprenyl phosphate + phosphate + H(+). In terms of biological role, catalyzes the dephosphorylation of undecaprenyl diphosphate (UPP). Confers resistance to bacitracin. This chain is Undecaprenyl-diphosphatase, found in Nostoc sp. (strain PCC 7120 / SAG 25.82 / UTEX 2576).